Reading from the N-terminus, the 207-residue chain is Ribonuclease HII (207 aa).

The RNase H type-2 domain maps to 18–207 (TYLSGSDEAG…PIKKISKETS (190 aa)). The a divalent metal cation site is built by D24, E25, and D116.

This sequence belongs to the RNase HII family. It depends on Mn(2+) as a cofactor. Mg(2+) serves as cofactor.

It is found in the cytoplasm. It carries out the reaction Endonucleolytic cleavage to 5'-phosphomonoester.. Its function is as follows. Endonuclease that specifically degrades the RNA of RNA-DNA hybrids. This Mycoplasma capricolum subsp. capricolum (strain California kid / ATCC 27343 / NCTC 10154) protein is Ribonuclease HII.